The primary structure comprises 100 residues: Urease subunit gamma (100 aa).

This sequence belongs to the urease gamma subunit family. As to quaternary structure, heterotrimer of UreA (gamma), UreB (beta) and UreC (alpha) subunits. Three heterotrimers associate to form the active enzyme.

It is found in the cytoplasm. It catalyses the reaction urea + 2 H2O + H(+) = hydrogencarbonate + 2 NH4(+). The protein operates within nitrogen metabolism; urea degradation; CO(2) and NH(3) from urea (urease route): step 1/1. This Rhizobium etli (strain ATCC 51251 / DSM 11541 / JCM 21823 / NBRC 15573 / CFN 42) protein is Urease subunit gamma.